Consider the following 396-residue polypeptide: Na(+)/H(+) antiporter NhaA 1 (396 aa).

12 consecutive transmembrane segments (helical) span residues 9-29 (LHNEAASGVLIFLAAVAAMLI), 59-79 (LLLWINDGLMAVFFLLVGLEL), 95-115 (VLPVVGAVGGIVGPALIYVMF), 125-145 (GWAVPTATDIAFAMGVLALLG), 154-174 (LFLLTLAIIDDLVAIVIIAIF), 177-197 (SDLSVGSLTVAGGAIALLFLL), 200-220 (IGVKGIAPYVLVGMVLWVAVL), 223-243 (GVHATLAGVVLAMAIPIKGET), 260-280 (VVGLVILPLFAFANAGVSLAG), 281-301 (LGLNVLLEPVAMGIGLGLLLG), 332-352 (GVALLCGIGFTMSLFISSLAF), and 373-393 (ILSGSLVSGVLGYLVLRFSLA).

It belongs to the NhaA Na(+)/H(+) (TC 2.A.33) antiporter family.

It localises to the cell inner membrane. It catalyses the reaction Na(+)(in) + 2 H(+)(out) = Na(+)(out) + 2 H(+)(in). In terms of biological role, na(+)/H(+) antiporter that extrudes sodium in exchange for external protons. This chain is Na(+)/H(+) antiporter NhaA 1, found in Magnetococcus marinus (strain ATCC BAA-1437 / JCM 17883 / MC-1).